The following is a 320-amino-acid chain: MAEPLLSEFQHQPQTSNCTGAVAVHEERNPDRPPGAEERVPEEDSRWQSRASPKSGGSPGHGGEGSLEPQPSPLKTQVCPESSCPEAGEKGQNGDDLSAGGAPPQQRQVGKKKHRRRPSKKKRLWKPYYTLTWEEKKKFDEKQSLRASRIRAEMFAKGQPVAPYNTTQFLMDDHDQEEPDLKTGLYPKRAAAKSDDTSDEDFMEEAGEEDGGSDGMGGDGSEFLQRDFSETYERYHAESLQNMSKQELIKEYLELEKCLSRMEDENNRLRLESQRLDGDDARVRELELELDRLRAENLQLLTENELHRQQERAPLSNFGD.

Residues 1–124 (MAEPLLSEFQ…RRRPSKKKRL (124 aa)) are disordered. Residues 9–19 (FQHQPQTSNCT) show a composition bias toward polar residues. The span at 24 to 47 (VHEERNPDRPPGAEERVPEEDSRW) shows a compositional bias: basic and acidic residues. Phosphoserine is present on S98. Basic residues predominate over residues 109–124 (VGKKKHRRRPSKKKRL). The tract at residues 111 to 138 (KKKHRRRPSKKKRLWKPYYTLTWEEKKK) is basic region; mediates nuclear localization and interaction with 7SK snRNA and NR3C1. The interaction with P-TEFb stretch occupies residues 163–166 (PYNT). Residues 171–211 (MDDHDQEEPDLKTGLYPKRAAAKSDDTSDEDFMEEAGEEDG) form an autoinhibitory acidic region; in absence of 7SK snRNA interacts with the basic region preventing interaction with P-TEFb and modulating subcellular localization region. The tract at residues 174–223 (HDQEEPDLKTGLYPKRAAAKSDDTSDEDFMEEAGEEDGGSDGMGGDGSEF) is disordered. S194 bears the Phosphoserine mark. T197 is modified (phosphothreonine). A compositionally biased stretch (acidic residues) spans 197–212 (TSDEDFMEEAGEEDGG). Phosphoserine occurs at positions 198, 213, and 221. Residues 244–310 (SKQELIKEYL…LTENELHRQQ (67 aa)) adopt a coiled-coil conformation. Positions 247–275 (ELIKEYLELEKCLSRMEDENNRLRLESQR) are mediates interaction with CCNT1. A required for inhibition of ESR1-dependent transcription region spans residues 271 to 316 (LESQRLDGDDARVRELELELDRLRAENLQLLTENELHRQQERAPLS).

Belongs to the HEXIM family. In terms of assembly, homooligomer and heterooligomer with HEXIM2; probably dimeric. Core component of the 7SK RNP complex, at least composed of 7SK RNA, LARP7, MEPCE, HEXIM1 (or HEXIM2) and P-TEFb (composed of CDK9 and CCNT1/cyclin-T1). Interacts with the N-CoR complex through NCOR1. Interacts with ESR1 and NR3C1. May interact with NF-kappa-B through RELA. Interacts with CCNT2; mediates formation of a tripartite complex with KPNA2. Part of the HDP-RNP complex composed of at least HEXIM1, PRKDC, XRCC5, XRCC6, paraspeckle proteins (SFPQ, NONO, PSPC1, RBM14, and MATR3) and NEAT1 non-coding RNA.

The protein resides in the nucleus. It localises to the cytoplasm. Functionally, transcriptional regulator which functions as a general RNA polymerase II transcription inhibitor. Core component of the 7SK RNP complex: in cooperation with 7SK snRNA sequesters P-TEFb in a large inactive 7SK snRNP complex preventing RNA polymerase II phosphorylation and subsequent transcriptional elongation. May also regulate NF-kappa-B, ESR1, NR3C1 and CIITA-dependent transcriptional activity. Plays a role in the regulation of DNA virus-mediated innate immune response by assembling into the HDP-RNP complex, a complex that serves as a platform for IRF3 phosphorylation and subsequent innate immune response activation through the cGAS-STING pathway. The polypeptide is Protein HEXIM1 (HEXIM1) (Bos taurus (Bovine)).